Reading from the N-terminus, the 465-residue chain is Mothers against decapentaplegic homolog 1 (465 aa).

Met-1 is modified (N-acetylmethionine). Residues 12–136 (PAVKRLLGWK…YKRVESPVLP (125 aa)) form the MH1 domain. Cys-64, Cys-109, Cys-121, and His-126 together coordinate Zn(2+). The segment at 162–246 (NEPHMPLNAT…DGSQPMDTNM (85 aa)) is disordered. Residues 179–212 (PNSHPFPHSPNSSYPNSPGGSSSTYPHSPTSSDP) show a composition bias toward low complexity. Over residues 221–232 (DTPPPAYLPPED) the composition is skewed to pro residues. Positions 271-465 (WCSIVYYELN…SPHNPISSVS (195 aa)) constitute an MH2 domain. The residue at position 322 (Thr-322) is a Phosphothreonine; by MINK1, TNIK and MAP4K4. An L3 loop region spans residues 418-428 (KGWGAEYHRQD). Residues Ser-463 and Ser-465 each carry the phosphoserine modification.

Belongs to the dwarfin/SMAD family. Found in a complex with SMAD4 and YY1. Interacts with HGS, NANOG and ZCCHC12. Upon C-terminus phosphorylation: forms trimers with another SMAD1 and the co-SMAD SMAD4. Interacts with PEBP2-alpha subunit, CREB-binding protein (CBP), p300, SMURF1, SMURF2, USP15 and HOXC8. Associates with ZNF423 or ZNF521 in response to BMP2 leading to activate transcription of BMP target genes. Interacts with SKOR1. Interacts (via MH2 domain) with LEMD3. Binding to LEMD3 results in at least a partial reduction of receptor-mediated phosphorylation. Forms a ternary complex with PSMB4 and OAZ1 before PSMB4 is incorporated into the 20S proteasome. Interacts (via MH2 domain) with FAM83G (via MH2 domain); in a SMAD4-independent manner. Interacts with ZC3H3. Interacts with TMEM119. Interacts (via MH1 and MH2 domains) with ZNF8. Interacts with RANBP3L; the interaction increases when SMAD1 is not phosphorylated and mediates SMAD1 nuclear export. Interacts with EGR1; this interaction inhibits SMAD1 dephosphorylation. Interacts with SMAD6. Interacts with YAP1. Interacts with MTMR4; negatively regulates BMP signaling through SMAD1 dephosphorylation and retention in endosomes. Post-translationally, phosphorylation of the C-terminal SVS motif by BMP type 1 receptor kinase activates SMAD1 by promoting dissociation from the receptor and trimerization with SMAD4. Phosphorylation by ERK2 MAP kinase in response to EGF or HGF prevents SMAD1 nuclear accumulation and transcriptional activity in response to BMP. Dephosphorylation, probably by PPM1A, induces its export from the nucleus to the cytoplasm. Dephosphorylation is inhibited by association with EGR1. Phosphorylation by CDK8/9 creates binding sites for YAP1, and subsequent phosphorylation by GSK3 switches off YAP1 binding and adds binding sites for SMURF1. Ubiquitinated by SMAD-specific E3 ubiquitin ligase SMURF1, leading to its degradation. Monoubiquitinated, leading to prevent DNA-binding. Deubiquitination by USP15 alleviates inhibition and promotes activation of TGF-beta target genes. Dephosphorylation, probably by PPM1A, induces its export from the nucleus to the cytoplasm. Phospho-SMAD1 is ubiquitinated by CHIP leading to disruption of the SMAD1-SMAD4 complex. Ubiquitous.

The protein localises to the cytoplasm. It localises to the nucleus. Functionally, transcriptional modulator that plays a role in various cellular processes, including embryonic development, cell differentiation, and tissue homeostasis. Upon BMP ligand binding to their receptors at the cell surface, is phosphorylated by activated type I BMP receptors (BMPRIs) and associates with SMAD4 to form a heteromeric complex which translocates into the nucleus acting as transcription factor. In turn, the hetero-trimeric complex recognizes cis-regulatory elements containing Smad Binding Elements (SBEs) to modulate the outcome of the signaling network. SMAD1/OAZ1/PSMB4 complex mediates the degradation of the CREBBP/EP300 repressor SNIP1. Positively regulates BMP4-induced expression of odontogenic development regulator MSX1 following IPO7-mediated nuclear import. The sequence is that of Mothers against decapentaplegic homolog 1 (Smad1) from Mus musculus (Mouse).